The sequence spans 100 residues: NADH-quinone oxidoreductase subunit K 1 (100 aa).

3 helical membrane passes run Leu-4–Val-24, Ile-29–Phe-49, and Ile-60–Met-80.

The protein belongs to the complex I subunit 4L family. NDH-1 is composed of 14 different subunits. Subunits NuoA, H, J, K, L, M, N constitute the membrane sector of the complex.

The protein localises to the cell inner membrane. It catalyses the reaction a quinone + NADH + 5 H(+)(in) = a quinol + NAD(+) + 4 H(+)(out). Functionally, NDH-1 shuttles electrons from NADH, via FMN and iron-sulfur (Fe-S) centers, to quinones in the respiratory chain. The immediate electron acceptor for the enzyme in this species is believed to be ubiquinone. Couples the redox reaction to proton translocation (for every two electrons transferred, four hydrogen ions are translocated across the cytoplasmic membrane), and thus conserves the redox energy in a proton gradient. This chain is NADH-quinone oxidoreductase subunit K 1, found in Geotalea daltonii (strain DSM 22248 / JCM 15807 / FRC-32) (Geobacter daltonii).